Here is a 627-residue protein sequence, read N- to C-terminus: MSAQQQKNLSESAQVDQQSVQPFPRSQKVYVQGSRPDIRVPMREISLDVTPTDFGGEINAPVTVYDTSGPYTDPNVTIDVRKGLSDVRSAWIEDRGDTEKLPGLSSEFGQRRLNDAELSAMRFAHVRNPRRARAGHNVSQMHYAKKGIITPEMEFVAIRENMKLAEAREAGLLNEQHAGHSFGASIPKEITPEFVRSEVARGRAIIPANINHVELEPMIIGRNFLVKINGNIGNSALGSSIEEEVAKLTWGIRWGSDTVMDLSTGKHIHETREWIIRNSPVPIGTVPIYQALEKVGGIAEDLTWELFRDTLIEQAEQGVDYFTIHAGVLLRYVPLTAKRVTGIVSRGGSIMAKWCLAHHKENFLYTHFEDICEIMKAYDVSFSLGDGLRPGSIADANDAAQFGELETLGELTKIAWKHDVQCMIEGPGHVPMQLIKENMDKQLECCDEAPFYTLGPLTTDIAPGYDHITSGIGAAMIGWFGCAMLCYVTPKEHLGLPNKDDVKTGIITYKIAAHAADLAKGHPGAQIRDNALSKARFEFRWEDQFNLGLDPDTARAFHDETLPKDSAKVAHFCSMCGPKFCSMKITQEVRDYAKEQRIDAVDLDAEQGMQAKAAEFKAQGSQLYQKV.

Residues 1–21 (MSAQQQKNLSESAQVDQQSVQ) are compositionally biased toward polar residues. The segment at 1 to 32 (MSAQQQKNLSESAQVDQQSVQPFPRSQKVYVQ) is disordered. Residues Asn231, Met260, Tyr289, His325, 345-347 (SRG), 386-389 (DGLR), and Glu425 contribute to the substrate site. His429 lines the Zn(2+) pocket. Substrate is bound at residue Tyr452. Zn(2+) is bound at residue His493. [4Fe-4S] cluster is bound by residues Cys573, Cys576, and Cys581.

It belongs to the ThiC family. Homodimer. The cofactor is [4Fe-4S] cluster.

The enzyme catalyses 5-amino-1-(5-phospho-beta-D-ribosyl)imidazole + S-adenosyl-L-methionine = 4-amino-2-methyl-5-(phosphooxymethyl)pyrimidine + CO + 5'-deoxyadenosine + formate + L-methionine + 3 H(+). It functions in the pathway cofactor biosynthesis; thiamine diphosphate biosynthesis. Catalyzes the synthesis of the hydroxymethylpyrimidine phosphate (HMP-P) moiety of thiamine from aminoimidazole ribotide (AIR) in a radical S-adenosyl-L-methionine (SAM)-dependent reaction. The protein is Phosphomethylpyrimidine synthase of Ectopseudomonas mendocina (strain ymp) (Pseudomonas mendocina).